The following is a 180-amino-acid chain: ATP synthase subunit delta (180 aa).

It belongs to the ATPase delta chain family. As to quaternary structure, F-type ATPases have 2 components, F(1) - the catalytic core - and F(0) - the membrane proton channel. F(1) has five subunits: alpha(3), beta(3), gamma(1), delta(1), epsilon(1). F(0) has three main subunits: a(1), b(2) and c(10-14). The alpha and beta chains form an alternating ring which encloses part of the gamma chain. F(1) is attached to F(0) by a central stalk formed by the gamma and epsilon chains, while a peripheral stalk is formed by the delta and b chains.

Its subcellular location is the cell inner membrane. Functionally, f(1)F(0) ATP synthase produces ATP from ADP in the presence of a proton or sodium gradient. F-type ATPases consist of two structural domains, F(1) containing the extramembraneous catalytic core and F(0) containing the membrane proton channel, linked together by a central stalk and a peripheral stalk. During catalysis, ATP synthesis in the catalytic domain of F(1) is coupled via a rotary mechanism of the central stalk subunits to proton translocation. This protein is part of the stalk that links CF(0) to CF(1). It either transmits conformational changes from CF(0) to CF(1) or is implicated in proton conduction. In Paracidovorax citrulli (strain AAC00-1) (Acidovorax citrulli), this protein is ATP synthase subunit delta.